A 471-amino-acid polypeptide reads, in one-letter code: Serine/threonine-protein kinase AtPK2/AtPK19 (471 aa).

The tract at residues 1–21 is disordered; that stretch reads MVSSQCSVANKNQTGKPFQKH. A Protein kinase domain is found at 140–395; it reads FEVLKVVGQG…AEEIKKHKWF (256 aa). ATP contacts are provided by residues 146–154 and lysine 169; that span reads VGQGAFGKV. Aspartate 263 (proton acceptor) is an active-site residue. The interval 281–307 is activation loop; that stretch reads DFGLAKEFEENTRSNSMCGTTEYMAPE. Serine 296 carries the phosphoserine; by PDPK1 modification. Residues 396 to 466 enclose the AGC-kinase C-terminal domain; that stretch reads KAINWKKLEA…VRPPHSFLHR (71 aa). Threonine 455 bears the Phosphothreonine; by TOR mark.

This sequence belongs to the protein kinase superfamily. AGC Ser/Thr protein kinase family. S6 kinase subfamily. In terms of assembly, interacts with TAP46. Binds to MRF1. In terms of processing, undergoes serine-specific autophosphorylation. Phosphorylated at Thr-455 by TOR.

It carries out the reaction L-seryl-[protein] + ATP = O-phospho-L-seryl-[protein] + ADP + H(+). The enzyme catalyses L-threonyl-[protein] + ATP = O-phospho-L-threonyl-[protein] + ADP + H(+). With respect to regulation, activated by PDK1. Functionally, downstream effector of TOR signaling pathway. May be involved in adaptation of plant to cold or high-salt conditions. Mediates the phosphorylation of MRFs (e.g. MRF1). The polypeptide is Serine/threonine-protein kinase AtPK2/AtPK19 (ATPK2) (Arabidopsis thaliana (Mouse-ear cress)).